The following is a 596-amino-acid chain: Elongation factor 4 (596 aa).

A tr-type G domain is found at 2 to 184 (KHIRNFSIIA…MIVKDVPPPV (183 aa)). GTP-binding positions include 14–19 (DHGKST) and 131–134 (NKID).

The protein belongs to the TRAFAC class translation factor GTPase superfamily. Classic translation factor GTPase family. LepA subfamily.

It localises to the cell inner membrane. It carries out the reaction GTP + H2O = GDP + phosphate + H(+). Its function is as follows. Required for accurate and efficient protein synthesis under certain stress conditions. May act as a fidelity factor of the translation reaction, by catalyzing a one-codon backward translocation of tRNAs on improperly translocated ribosomes. Back-translocation proceeds from a post-translocation (POST) complex to a pre-translocation (PRE) complex, thus giving elongation factor G a second chance to translocate the tRNAs correctly. Binds to ribosomes in a GTP-dependent manner. The polypeptide is Elongation factor 4 (Pseudoalteromonas translucida (strain TAC 125)).